Consider the following 137-residue polypeptide: Large ribosomal subunit protein uL16c (137 aa).

Residues 1 to 21 (MLSPKRTKFRRHHRGRMKGKA) are disordered.

This sequence belongs to the universal ribosomal protein uL16 family. As to quaternary structure, part of the 50S ribosomal subunit.

It localises to the plastid. The protein localises to the chloroplast. In Tupiella akineta (Green alga), this protein is Large ribosomal subunit protein uL16c.